The following is a 148-amino-acid chain: UPF0758 protein YeeS (148 aa).

The MPN domain occupies 26–148 (AFTSTRAARE…VFSFAEHGLL (123 aa)). Zn(2+) is bound by residues His97, His99, and Asp110. The JAMM motif signature appears at 97-110 (HNHPSGEVTPSKAD).

Belongs to the UPF0758 family.

In Escherichia coli (strain K12), this protein is UPF0758 protein YeeS (yeeS).